A 175-amino-acid polypeptide reads, in one-letter code: Acireductone dioxygenase (175 aa).

Residues His81, His83, Glu87, and His126 each coordinate Fe(2+). Residues His81, His83, Glu87, and His126 each coordinate Ni(2+).

This sequence belongs to the acireductone dioxygenase (ARD) family. Fe(2+) is required as a cofactor. Ni(2+) serves as cofactor.

Its subcellular location is the cytoplasm. The protein localises to the nucleus. The catalysed reaction is 1,2-dihydroxy-5-(methylsulfanyl)pent-1-en-3-one + O2 = 4-methylsulfanyl-2-oxobutanoate + formate + 2 H(+). It catalyses the reaction 1,2-dihydroxy-5-(methylsulfanyl)pent-1-en-3-one + O2 = 3-(methylsulfanyl)propanoate + CO + formate + 2 H(+). It participates in amino-acid biosynthesis; L-methionine biosynthesis via salvage pathway; L-methionine from S-methyl-5-thio-alpha-D-ribose 1-phosphate: step 5/6. In terms of biological role, catalyzes 2 different reactions between oxygen and the acireductone 1,2-dihydroxy-3-keto-5-methylthiopentene (DHK-MTPene) depending upon the metal bound in the active site. Fe-containing acireductone dioxygenase (Fe-ARD) produces formate and 2-keto-4-methylthiobutyrate (KMTB), the alpha-ketoacid precursor of methionine in the methionine recycle pathway. Ni-containing acireductone dioxygenase (Ni-ARD) produces methylthiopropionate, carbon monoxide and formate, and does not lie on the methionine recycle pathway. The sequence is that of Acireductone dioxygenase from Phaeosphaeria nodorum (strain SN15 / ATCC MYA-4574 / FGSC 10173) (Glume blotch fungus).